Reading from the N-terminus, the 175-residue chain is CASP-like protein 2C1 (175 aa).

The Cytoplasmic segment spans residues 1–7 (MVRLRET). The helical transmembrane segment at 8–28 (EVILRLCIVFFILLSSCLIGL) threads the bilayer. Residues 29–51 (DSQTKEIAYIHKKVSFRYLLALE) lie on the Extracellular side of the membrane. A helical transmembrane segment spans residues 52–72 (AELYINVVVAAYNLVQIGLGW). Residues 73-91 (YNVEQKTSNPKWFSYLLDQ) lie on the Cytoplasmic side of the membrane. The helical transmembrane segment at 92–112 (TAAYVVFAGTSAAAQHSLLVV) threads the bilayer. The Extracellular segment spans residues 113-136 (TGSRELQWMKWCYKFTRFCFQMGS). A helical transmembrane segment spans residues 137-157 (AIILNYIAAALMVLLSSISAF). Over 158–175 (NLFRLYSPKRFFSFKSSS) the chain is Cytoplasmic.

The protein belongs to the Casparian strip membrane proteins (CASP) family. Homodimer and heterodimers.

It is found in the cell membrane. This is CASP-like protein 2C1 from Arabidopsis lyrata subsp. lyrata (Lyre-leaved rock-cress).